Here is a 419-residue protein sequence, read N- to C-terminus: O-antigen ligase (419 aa).

The Cytoplasmic portion of the chain corresponds to 1 to 19 (MLTSFKLHSLKPYTLKSSM). A helical membrane pass occupies residues 20–38 (ILEIITYILCFFSMIIAFV). The Periplasmic portion of the chain corresponds to 39-43 (DNTFS). The helical transmembrane segment at 44–61 (IKIYNITAIVCLLSLILR) threads the bilayer. Residues 62–71 (GRQENYNIKN) are Cytoplasmic-facing. A helical membrane pass occupies residues 72–91 (LILPLSIFLIGLLDLIWYSA). The Periplasmic portion of the chain corresponds to 92 to 107 (FKVDNSPFRATYHSYL). A helical membrane pass occupies residues 108–125 (NTAKIFIFGSFIVFLTLT). The Cytoplasmic portion of the chain corresponds to 126 to 134 (SQLKSKKES). The helical transmembrane segment at 135–153 (VLYTLYSLSFLIAGYAMYI) threads the bilayer. Residues 154 to 167 (NSIHENDRISFGVG) are Periplasmic-facing. A helical membrane pass occupies residues 168-187 (TATGAAYSTMLIGIVSGVAI). Residues 188-194 (LYTKKNH) lie on the Cytoplasmic side of the membrane. Residues 195-211 (PFLFLLNSCAVLYVLAL) form a helical membrane-spanning segment. Over 212 to 216 (TQTRA) the chain is Periplasmic. Residues 217–234 (TLLLFPIICVAALIAYYN) form a helical membrane-spanning segment. Topologically, residues 235 to 240 (KSPKKF) are cytoplasmic. A helical transmembrane segment spans residues 241-259 (TSSIVLLIAILASIVIIFN). Residues 260–348 (KPIQNRYNEA…NEIIEAGSLK (89 aa)) lie on the Periplasmic side of the membrane. Residues 349 to 367 (GLMGIFSTLFLYFSLFYIA) traverse the membrane as a helical segment. The Cytoplasmic segment spans residues 368-372 (YKKRA). The chain crosses the membrane as a helical span at residues 373–391 (LGLLILTLGIVGIGLSDVI). At 392–396 (IWARS) the chain is on the periplasmic side. The helical transmembrane segment at 397 to 412 (IPIIIISAIVLLLVIN) threads the bilayer. Residues 413-419 (NRNNTIN) are Cytoplasmic-facing.

As to quaternary structure, homodimer.

The protein localises to the cell inner membrane. It carries out the reaction a lipid-linked O antigen + a lipid A-core oligosaccharide = a lipopolysaccharide + a polyisoprenyl diphosphate.. It participates in bacterial outer membrane biogenesis; lipopolysaccharide biosynthesis. Its activity is regulated as follows. Activity does not require ATP and magnesium ions. Functionally, transferase involved in the biosynthesis of the lipopolysaccharide (LPS). In vitro, catalyzes the transfer of a polymerized O-antigen molecule from its polyprenyl diphosphate membrane anchor to a terminal sugar of the lipid A-core oligosaccharide, finalizing the biosynthesis of the lipopolysaccharide. The enzyme is functional and can be used to give diverse hybrid O-antigens in vitro, but K12 strains do not produce the O-antigen in vivo due to mutations in the rfb gene cluster. K12 strains are phenotypically rough, their lipopolysaccharide having a complete core structure, but no O-antigen. In highly mucoid K12 strains, WaaL can ligate colanic acid (CA or M-antigen) repeats to a significant proportion of lipopolysaccharide (LPS) core acceptor molecules, forming the LPS glycoform M(LPS). The attachment point was identified as O-7 of the L-glycero-D-manno-heptose of the outer LPS core, the same position used for O-antigen ligation. Cannot catalyze ATP hydrolysis in vitro. In Escherichia coli (strain K12), this protein is O-antigen ligase.